We begin with the raw amino-acid sequence, 558 residues long: MPAKLNSPSRYHGIYNAPHRAFLRSVGLTDEEIGKPLVAIATAWSEAGPCNFHALALARVAKEGTKEAGLSPLAFPTMVVNDNIGMGSEGMRYSLVSRDLIADMVEAQFNAHAFDGLVGIGGCDKTTPGILMAMARLNVPSIYIYGGSAEPGYFMGKRLTIEDVHEAIGAYLAKRITENELYEIEKRAHPTLGTCSGLFTANTMGSMSEALGMALPGSASPTATSSRRVMYVKETGKALGSLIENGIKSREILTFEAFENAITTLMAMGGSTNAVLHLLAIAYEAGVKLTLDDFNRISKRTPYIASMKPGGDYVMADLDEVGGVPVVLKKLLDAGLLHGDVLTVTGKTMKQNLEQYKYPNVPHSHIVRDVKNPIKPRGGIVILKGSLAPEGAVIKVAATNVVKFEGKAKVYNSEDDAFKGVQSGEVSEGEVVIIRYEGPKGAPGMPEMLRVTAAIMGAGLNNVALVTDGRFSGATRGPMVGHVAPEAMVGGPIAIVEDGDTIVIDVESERLDLKLSEEEIRNRLKRWSPPSPRYKSGLLAKYASLVSQASMGAVTRPA.

A [2Fe-2S] cluster-binding site is contributed by Cys50. Mg(2+) is bound at residue Asp82. Cys123 serves as a coordination point for [2Fe-2S] cluster. The Mg(2+) site is built by Asp124 and Lys125. Lys125 bears the N6-carboxylysine mark. Cys195 lines the [2Fe-2S] cluster pocket. A Mg(2+)-binding site is contributed by Glu447. Ser472 serves as the catalytic Proton acceptor.

The protein belongs to the IlvD/Edd family. As to quaternary structure, homodimer. [2Fe-2S] cluster is required as a cofactor. The cofactor is Mg(2+).

It carries out the reaction (2R)-2,3-dihydroxy-3-methylbutanoate = 3-methyl-2-oxobutanoate + H2O. It catalyses the reaction (2R,3R)-2,3-dihydroxy-3-methylpentanoate = (S)-3-methyl-2-oxopentanoate + H2O. Its pathway is amino-acid biosynthesis; L-isoleucine biosynthesis; L-isoleucine from 2-oxobutanoate: step 3/4. It participates in amino-acid biosynthesis; L-valine biosynthesis; L-valine from pyruvate: step 3/4. Functions in the biosynthesis of branched-chain amino acids. Catalyzes the dehydration of (2R,3R)-2,3-dihydroxy-3-methylpentanoate (2,3-dihydroxy-3-methylvalerate) into 2-oxo-3-methylpentanoate (2-oxo-3-methylvalerate) and of (2R)-2,3-dihydroxy-3-methylbutanoate (2,3-dihydroxyisovalerate) into 2-oxo-3-methylbutanoate (2-oxoisovalerate), the penultimate precursor to L-isoleucine and L-valine, respectively. This is Dihydroxy-acid dehydratase from Saccharolobus islandicus (strain L.S.2.15 / Lassen #1) (Sulfolobus islandicus).